A 480-amino-acid polypeptide reads, in one-letter code: Protein nucleotidyltransferase YdiU (480 aa).

Glycine 86, glycine 88, arginine 89, lysine 109, aspartate 121, glycine 122, arginine 172, and arginine 179 together coordinate ATP. The active-site Proton acceptor is aspartate 248. Positions 249 and 258 each coordinate Mg(2+). An ATP-binding site is contributed by aspartate 258.

It belongs to the SELO family. It depends on Mg(2+) as a cofactor. Mn(2+) is required as a cofactor.

It catalyses the reaction L-seryl-[protein] + ATP = 3-O-(5'-adenylyl)-L-seryl-[protein] + diphosphate. The catalysed reaction is L-threonyl-[protein] + ATP = 3-O-(5'-adenylyl)-L-threonyl-[protein] + diphosphate. It carries out the reaction L-tyrosyl-[protein] + ATP = O-(5'-adenylyl)-L-tyrosyl-[protein] + diphosphate. The enzyme catalyses L-histidyl-[protein] + UTP = N(tele)-(5'-uridylyl)-L-histidyl-[protein] + diphosphate. It catalyses the reaction L-seryl-[protein] + UTP = O-(5'-uridylyl)-L-seryl-[protein] + diphosphate. The catalysed reaction is L-tyrosyl-[protein] + UTP = O-(5'-uridylyl)-L-tyrosyl-[protein] + diphosphate. In terms of biological role, nucleotidyltransferase involved in the post-translational modification of proteins. It can catalyze the addition of adenosine monophosphate (AMP) or uridine monophosphate (UMP) to a protein, resulting in modifications known as AMPylation and UMPylation. The polypeptide is Protein nucleotidyltransferase YdiU (Salmonella typhi).